A 598-amino-acid polypeptide reads, in one-letter code: Elongation factor 4 (598 aa).

The tr-type G domain maps to 4–186 (KHIRNFSIIA…VIVRQIPPPE (183 aa)). GTP contacts are provided by residues 16-21 (DHGKST) and 133-136 (NKID).

This sequence belongs to the TRAFAC class translation factor GTPase superfamily. Classic translation factor GTPase family. LepA subfamily.

The protein resides in the cell inner membrane. The enzyme catalyses GTP + H2O = GDP + phosphate + H(+). Required for accurate and efficient protein synthesis under certain stress conditions. May act as a fidelity factor of the translation reaction, by catalyzing a one-codon backward translocation of tRNAs on improperly translocated ribosomes. Back-translocation proceeds from a post-translocation (POST) complex to a pre-translocation (PRE) complex, thus giving elongation factor G a second chance to translocate the tRNAs correctly. Binds to ribosomes in a GTP-dependent manner. The protein is Elongation factor 4 of Pseudoalteromonas atlantica (strain T6c / ATCC BAA-1087).